Here is a 302-residue protein sequence, read N- to C-terminus: Cyclopropane mycolic acid synthase 2 (302 aa).

Residues tyrosine 41–serine 42, leucine 76–glycine 84, threonine 102–glutamine 107, and tryptophan 131–glutamate 132 contribute to the S-adenosyl-L-methionine site. Cysteine 284 is an active-site residue.

The protein belongs to the CFA/CMAS family. In terms of assembly, homodimer.

The protein localises to the cytoplasm. It carries out the reaction a 1-acyl-2-(9Z)-enoyl-sn-glycero-3-phospholipid + S-adenosyl-L-methionine = a 1-acyl-2-(9-cyclopronane)-acyl-sn-glycero-3-phospholipid + S-adenosyl-L-homocysteine + H(+). Its pathway is lipid metabolism; mycolic acid biosynthesis. In terms of biological role, catalyzes the formation of trans cyclopropanated ketomycolate or methoxymycolate through the conversion of a double bond to a cyclopropane ring at the proximal position of an oxygenated mycolic acid via the transfer of a methylene group from S-adenosyl-L-methionine. In the absence of MmaA2, CmaA2 has a non-specific cis-cyclopropanating activity and is able to catalyze the conversion of a double bond to a cis cyclopropane ring at the distal position of an alpha mycolic acid. Cyclopropanated mycolic acids are key factors participating in cell envelope permeability, host immunomodulation and persistence. In Mycobacterium bovis (strain ATCC BAA-935 / AF2122/97), this protein is Cyclopropane mycolic acid synthase 2 (cmaA2).